A 577-amino-acid polypeptide reads, in one-letter code: Zinc finger protein 384 (577 aa).

The segment at 171–225 is disordered; sequence TLTEEGGGGGGGGGSVAPKPPRGRKKKRMLESGLPEMNDPYVLSPEDDDDHQKDG. The span at 175–185 shows a compositional bias: gly residues; that stretch reads EGGGGGGGGGS. At Ser-214 the chain carries Phosphoserine. C2H2-type zinc fingers lie at residues 228-250, 256-278, 284-306, 317-339, 345-367, 373-397, 403-425, and 433-455; these read YRCR…SKSH, HKCP…IRIH, YSCN…TRIH, HKCP…LRIH, YNCS…TRIH, YKCA…RRQH, FKCH…LSTH, and YTCT…MRKH. Residues 501–515 show a composition bias toward low complexity; that stretch reads QQQQQQQQQQQQQQQ. Positions 501-550 are disordered; it reads QQQQQQQQQQQQQQQQPPPHFQSPGAAPQGGGGGDSNPNPPPQCSFDLTP.

Belongs to the krueppel C2H2-type zinc-finger protein family. In terms of assembly, interacts with BCAR1.

It is found in the nucleus. In terms of biological role, transcription factor that binds the consensus DNA sequence [GC]AAAAA. Seems to bind and regulate the promoters of MMP1, MMP3, MMP7 and COL1A1. This Homo sapiens (Human) protein is Zinc finger protein 384 (ZNF384).